Reading from the N-terminus, the 117-residue chain is Large ribosomal subunit protein uL18 (117 aa).

The protein belongs to the universal ribosomal protein uL18 family. Part of the 50S ribosomal subunit; part of the 5S rRNA/L5/L18/L25 subcomplex. Contacts the 5S and 23S rRNAs.

This is one of the proteins that bind and probably mediate the attachment of the 5S RNA into the large ribosomal subunit, where it forms part of the central protuberance. This Actinobacillus pleuropneumoniae serotype 5b (strain L20) protein is Large ribosomal subunit protein uL18.